The chain runs to 94 residues: Acylphosphatase (94 aa).

The 88-residue stretch at 7 to 94 (AVQARVYGRV…TAPGDFRIVA (88 aa)) folds into the Acylphosphatase-like domain. Residues R22 and N40 contribute to the active site.

Belongs to the acylphosphatase family.

The catalysed reaction is an acyl phosphate + H2O = a carboxylate + phosphate + H(+). The sequence is that of Acylphosphatase (acyP) from Mesorhizobium japonicum (strain LMG 29417 / CECT 9101 / MAFF 303099) (Mesorhizobium loti (strain MAFF 303099)).